The following is a 683-amino-acid chain: MIDRYKHQQLRIGLVSPQQISAWATKILPNGEIVGEVTKPYTFHYKTNKPEKDGLFCERIFGPIKSGICACGNYRVIGDEKEDPKFCEQCGVQFVDSRIRRYQMGYIKLACPVTHVWYLKRLPSYIANLLDKSLKELEGLVYCDYLNFSFARPITKKPTFLRLRGSFKYEIQSWKYSIPLFFTTQGFDTFRNREISTGAVAIREQLADLDLRIILENSLVEWKELGEEGPTGNEWEDRKVGRRKDFLVRRMELTKHFIRTNIEPEWMVLFLLPVLPPELRPIIQIDGGKLMSSDINELYRRVIYRNNTLTDLLTTSRSTPGELVMCQEKLVQEAVDTLLDNGIRGQPMKDGHNKVYKSFSDVIEGKEGRFRETLLGKRVDYSGRSVIVVGPSLSLHRCGLPREIAIELFQTFVIRGLIRQHLASNIGVAKNKIREKEPIVWEILQEVMQGHPVLLNRAPTLHRLGIQAFQPVLVEGRAICLHPLVCKGFNADFDGDQMAVHVPLSLEAQAEARLLMFSHMNLLSPAIGDPISVPTQDMLMGLYVLTSGNRRGICVNRYNPWNRRNYQTKKSDNNNYEYTKEPFFCNSYDAIGAYRQKRINLDSPLWLRWPLDQRVIASREIPIEVHYESLGIYYEIYGHYLIVKSIKKEILFLYIRTTVGHISLYREIEEAIQGFSHACSYGT.

Zn(2+) is bound by residues Cys-69, Cys-71, Cys-87, and Cys-90. Asp-492, Asp-494, and Asp-496 together coordinate Mg(2+).

This sequence belongs to the RNA polymerase beta' chain family. RpoC1 subfamily. In plastids the minimal PEP RNA polymerase catalytic core is composed of four subunits: alpha, beta, beta', and beta''. When a (nuclear-encoded) sigma factor is associated with the core the holoenzyme is formed, which can initiate transcription. It depends on Mg(2+) as a cofactor. The cofactor is Zn(2+).

The protein resides in the plastid. It localises to the chloroplast. The catalysed reaction is RNA(n) + a ribonucleoside 5'-triphosphate = RNA(n+1) + diphosphate. Functionally, DNA-dependent RNA polymerase catalyzes the transcription of DNA into RNA using the four ribonucleoside triphosphates as substrates. The sequence is that of DNA-directed RNA polymerase subunit beta' from Coffea arabica (Arabian coffee).